We begin with the raw amino-acid sequence, 212 residues long: Major fimbrial subunit (212 aa).

The signal sequence occupies residues 1-18 (MKKTLLGSLILLAFATNA). Residues cysteine 42 and cysteine 82 are joined by a disulfide bond.

Belongs to the fimbrial protein family.

Its subcellular location is the fimbrium. Functionally, mediates adherence to oropharyngeal epithelial cells. Helps the airway colonization process. The chain is Major fimbrial subunit (hifA) from Haemophilus influenzae.